The following is a 173-amino-acid chain: Disulfide bond formation protein B (173 aa).

Over 1–16 (MRILSSLKTFSQSRLS) the chain is Cytoplasmic. Residues 17 to 33 (WLLLLAFVVFFTLCAMY) traverse the membrane as a helical segment. Topologically, residues 34 to 51 (FQHVMLLAPCVMCIYERI) are periplasmic. Cysteine 43 and cysteine 46 are oxidised to a cystine. Residues 52–67 (AMLGIGVAALIGAIAP) form a helical membrane-spanning segment. At 68-74 (QNPVVRW) the chain is on the cytoplasmic side. Residues 75–92 (LGFAAWGASSYKGLMLAI) form a helical membrane-spanning segment. The Periplasmic segment spans residues 93–147 (EHVNYQFNPSPFATCDLFVTFPAWAPLNQWAPNLFEAYGDCSKVVWQFLTLSMPQ). An intrachain disulfide couples cysteine 107 to cysteine 133. Residues 148–166 (WLVVIFAANLLALAIFVVA) traverse the membrane as a helical segment. The Cytoplasmic segment spans residues 167–173 (QLAKTSR).

Belongs to the DsbB family.

Its subcellular location is the cell inner membrane. Functionally, required for disulfide bond formation in some periplasmic proteins. Acts by oxidizing the DsbA protein. This is Disulfide bond formation protein B from Vibrio cholerae serotype O1 (strain ATCC 39315 / El Tor Inaba N16961).